Reading from the N-terminus, the 194-residue chain is PRELI domain containing protein 3B (194 aa).

The 172-residue stretch at Met1–Glu172 folds into the PRELI/MSF1 domain. 2 positions are modified to phosphoserine: Ser46 and Ser51.

It belongs to the slowmo family.

The protein is PRELI domain containing protein 3B (PRELID3B) of Homo sapiens (Human).